The following is a 117-amino-acid chain: Large ribosomal subunit protein uL18 (117 aa).

This sequence belongs to the universal ribosomal protein uL18 family. In terms of assembly, part of the 50S ribosomal subunit; part of the 5S rRNA/L5/L18/L25 subcomplex. Contacts the 5S and 23S rRNAs.

In terms of biological role, this is one of the proteins that bind and probably mediate the attachment of the 5S RNA into the large ribosomal subunit, where it forms part of the central protuberance. This Chromobacterium violaceum (strain ATCC 12472 / DSM 30191 / JCM 1249 / CCUG 213 / NBRC 12614 / NCIMB 9131 / NCTC 9757 / MK) protein is Large ribosomal subunit protein uL18.